The sequence spans 683 residues: Acyl-CoA synthetase short-chain family member 3, mitochondrial (683 aa).

The N-terminal 29 residues, 1–29 (MKPSWLQCRKVTGAGTLGAPLPGSPSVRG), are a transit peptide targeting the mitochondrion. 223–226 (EPGR) contributes to the CoA binding site. ATP-binding positions include 421–423 (GER) and 442–447 (DHWWQT). Residue Lys-514 is modified to N6-succinyllysine. An N6-acetyllysine modification is found at Lys-520. Asp-535, Arg-550, and Arg-561 together coordinate ATP. Arg-620 contacts CoA.

This sequence belongs to the ATP-dependent AMP-binding enzyme family. In terms of tissue distribution, expressed in a wide range of tissues, with the highest levels observed in the liver followed by kidney.

The protein resides in the mitochondrion matrix. It catalyses the reaction acetate + ATP + CoA = acetyl-CoA + AMP + diphosphate. It carries out the reaction propanoate + ATP + CoA = propanoyl-CoA + AMP + diphosphate. The enzyme catalyses butanoate + ATP + CoA = butanoyl-CoA + AMP + diphosphate. Functionally, catalyzes the synthesis of acetyl-CoA from short-chain fatty acids. Propionate is the preferred substrate but can also utilize acetate and butyrate with a much lower affinity. This chain is Acyl-CoA synthetase short-chain family member 3, mitochondrial (Acss3), found in Rattus norvegicus (Rat).